The primary structure comprises 367 residues: Deoxyhypusine synthase-like protein (367 aa).

Residues 1 to 23 are disordered; that stretch reads MKSLFQRRASKVRETEAMNAPVP.

It belongs to the deoxyhypusine synthase family.

The chain is Deoxyhypusine synthase-like protein from Caulobacter vibrioides (strain ATCC 19089 / CIP 103742 / CB 15) (Caulobacter crescentus).